Here is a 157-residue protein sequence, read N- to C-terminus: Crossover junction endodeoxyribonuclease RuvC (157 aa).

Catalysis depends on residues aspartate 7, glutamate 67, and aspartate 139. Mg(2+)-binding residues include aspartate 7, glutamate 67, and aspartate 139.

The protein belongs to the RuvC family. As to quaternary structure, homodimer which binds Holliday junction (HJ) DNA. The HJ becomes 2-fold symmetrical on binding to RuvC with unstacked arms; it has a different conformation from HJ DNA in complex with RuvA. In the full resolvosome a probable DNA-RuvA(4)-RuvB(12)-RuvC(2) complex forms which resolves the HJ. Mg(2+) serves as cofactor.

It is found in the cytoplasm. The enzyme catalyses Endonucleolytic cleavage at a junction such as a reciprocal single-stranded crossover between two homologous DNA duplexes (Holliday junction).. The RuvA-RuvB-RuvC complex processes Holliday junction (HJ) DNA during genetic recombination and DNA repair. Endonuclease that resolves HJ intermediates. Cleaves cruciform DNA by making single-stranded nicks across the HJ at symmetrical positions within the homologous arms, yielding a 5'-phosphate and a 3'-hydroxyl group; requires a central core of homology in the junction. The consensus cleavage sequence is 5'-(A/T)TT(C/G)-3'. Cleavage occurs on the 3'-side of the TT dinucleotide at the point of strand exchange. HJ branch migration catalyzed by RuvA-RuvB allows RuvC to scan DNA until it finds its consensus sequence, where it cleaves and resolves the cruciform DNA. The chain is Crossover junction endodeoxyribonuclease RuvC from Prochlorococcus marinus (strain MIT 9301).